The sequence spans 244 residues: Neurogenin-1 (244 aa).

2 disordered regions span residues 1-27 (MPAPLETCISDLDCSSSNSSSDLSSFL) and 39-82 (LAST…ARVR). Residues 10-27 (SDLDCSSSNSSSDLSSFL) show a composition bias toward low complexity. The bHLH domain maps to 93–145 (SRRVKANDRERNRMHNLNAALDALRSVLPSFPDDTKLTKIETLRFAYNYIWAL).

Efficient DNA binding requires dimerization with another bHLH protein. Expression restricted to the embryonic nervous system.

The protein localises to the nucleus. Its function is as follows. Acts as a transcriptional regulator. Involved in the initiation of neuronal differentiation. Activates transcription by binding to the E box (5'-CANNTG-3'). Associates with chromatin to enhancer regulatory elements in genes encoding key transcriptional regulators of neurogenesis. The polypeptide is Neurogenin-1 (Neurog1) (Mus musculus (Mouse)).